A 461-amino-acid polypeptide reads, in one-letter code: Bifunctional protein HldE (461 aa).

The tract at residues 1-315 is ribokinase; sequence MKKILVIGDL…LILNQTHPKI (315 aa). 191–194 provides a ligand contact to ATP; sequence NRTE. Residue aspartate 260 is part of the active site. Residues 332-461 are cytidylyltransferase; that stretch reads FTNGCFDLLH…IEKIKRTCND (130 aa).

In the N-terminal section; belongs to the carbohydrate kinase PfkB family. It in the C-terminal section; belongs to the cytidylyltransferase family. In terms of assembly, homodimer.

The enzyme catalyses D-glycero-beta-D-manno-heptose 7-phosphate + ATP = D-glycero-beta-D-manno-heptose 1,7-bisphosphate + ADP + H(+). It carries out the reaction D-glycero-beta-D-manno-heptose 1-phosphate + ATP + H(+) = ADP-D-glycero-beta-D-manno-heptose + diphosphate. The protein operates within nucleotide-sugar biosynthesis; ADP-L-glycero-beta-D-manno-heptose biosynthesis; ADP-L-glycero-beta-D-manno-heptose from D-glycero-beta-D-manno-heptose 7-phosphate: step 1/4. It participates in nucleotide-sugar biosynthesis; ADP-L-glycero-beta-D-manno-heptose biosynthesis; ADP-L-glycero-beta-D-manno-heptose from D-glycero-beta-D-manno-heptose 7-phosphate: step 3/4. It functions in the pathway bacterial outer membrane biogenesis; LPS core biosynthesis. Catalyzes the phosphorylation of D-glycero-D-manno-heptose 7-phosphate at the C-1 position to selectively form D-glycero-beta-D-manno-heptose-1,7-bisphosphate. In terms of biological role, catalyzes the ADP transfer from ATP to D-glycero-beta-D-manno-heptose 1-phosphate, yielding ADP-D-glycero-beta-D-manno-heptose. In Helicobacter pylori (strain ATCC 700392 / 26695) (Campylobacter pylori), this protein is Bifunctional protein HldE.